The following is a 298-amino-acid chain: Glutamate/glycine mitochondrial carrier ymc1 (298 aa).

Solcar repeat units lie at residues 14-98, 106-193, and 206-294; these read TKDF…CKRF, VTMP…LVKN, and TPGW…VSQH. 6 helical membrane passes run 17 to 37, 67 to 87, 112 to 132, 172 to 192, 212 to 232, and 266 to 287; these read FLAG…FDCV, LAAF…CVSI, YVSG…VEHV, TAAR…ALVK, CVFG…FDIV, and FYRG…TFYV.

The protein belongs to the mitochondrial carrier (TC 2.A.29) family.

The protein localises to the mitochondrion inner membrane. Acts as a glutamate and glycine mitochondrial transmembrane transporter. The sequence is that of Glutamate/glycine mitochondrial carrier ymc1 (ymc1) from Schizosaccharomyces pombe (strain 972 / ATCC 24843) (Fission yeast).